The sequence spans 366 residues: Putative zinc metalloprotease slr1821 (366 aa).

Histidine 20 is a binding site for Zn(2+). Residue glutamate 21 is part of the active site. Histidine 24 contacts Zn(2+). The next 3 helical transmembrane spans lie at 95 to 115 (AIVI…LLIG), 293 to 313 (AVIN…FLLI), and 325 to 345 (FQMG…VFLI). In terms of domain architecture, PDZ spans 106–188 (LVFAYFLLIG…VPITVEVQRG (83 aa)).

Belongs to the peptidase M50B family. Zn(2+) serves as cofactor.

The protein resides in the cell inner membrane. This is Putative zinc metalloprotease slr1821 from Synechocystis sp. (strain ATCC 27184 / PCC 6803 / Kazusa).